Consider the following 285-residue polypeptide: Probable endonuclease 4 (285 aa).

The Zn(2+) site is built by histidine 69, histidine 109, glutamate 145, aspartate 179, histidine 182, histidine 216, aspartate 229, histidine 231, and glutamate 261.

It belongs to the AP endonuclease 2 family. Zn(2+) serves as cofactor.

The enzyme catalyses Endonucleolytic cleavage to 5'-phosphooligonucleotide end-products.. Its function is as follows. Endonuclease IV plays a role in DNA repair. It cleaves phosphodiester bonds at apurinic or apyrimidinic (AP) sites, generating a 3'-hydroxyl group and a 5'-terminal sugar phosphate. The protein is Probable endonuclease 4 of Citrobacter koseri (strain ATCC BAA-895 / CDC 4225-83 / SGSC4696).